Reading from the N-terminus, the 467-residue chain is Cysteine--tRNA ligase (467 aa).

Cys-28 is a binding site for Zn(2+). Positions 30 to 40 (MTVYDYCHLGH) match the 'HIGH' region motif. Positions 209, 234, and 238 each coordinate Zn(2+). Positions 266–270 (KMSKS) match the 'KMSKS' region motif. Lys-269 is an ATP binding site.

The protein belongs to the class-I aminoacyl-tRNA synthetase family. In terms of assembly, monomer. The cofactor is Zn(2+).

It is found in the cytoplasm. It carries out the reaction tRNA(Cys) + L-cysteine + ATP = L-cysteinyl-tRNA(Cys) + AMP + diphosphate. This chain is Cysteine--tRNA ligase, found in Hahella chejuensis (strain KCTC 2396).